Here is a 284-residue protein sequence, read N- to C-terminus: Tropomyosin (284 aa).

Positions 1–284 (MDAIKKKMQA…DQTFAEIAGY (284 aa)) form a coiled coil. The interval 103–133 (EEKLATTTEKLEEASKAADESERNRKVLEGR) is disordered.

This sequence belongs to the tropomyosin family. Homodimer.

Its function is as follows. Tropomyosin, in association with the troponin complex, plays a central role in the calcium dependent regulation of muscle contraction. In Chlamys nipponensis akazara (Akazara scallop), this protein is Tropomyosin.